The following is a 116-amino-acid chain: Ribonuclease P protein component (116 aa).

Belongs to the RnpA family. In terms of assembly, consists of a catalytic RNA component (M1 or rnpB) and a protein subunit.

The catalysed reaction is Endonucleolytic cleavage of RNA, removing 5'-extranucleotides from tRNA precursor.. In terms of biological role, RNaseP catalyzes the removal of the 5'-leader sequence from pre-tRNA to produce the mature 5'-terminus. It can also cleave other RNA substrates such as 4.5S RNA. The protein component plays an auxiliary but essential role in vivo by binding to the 5'-leader sequence and broadening the substrate specificity of the ribozyme. This Leuconostoc mesenteroides subsp. mesenteroides (strain ATCC 8293 / DSM 20343 / BCRC 11652 / CCM 1803 / JCM 6124 / NCDO 523 / NBRC 100496 / NCIMB 8023 / NCTC 12954 / NRRL B-1118 / 37Y) protein is Ribonuclease P protein component.